The primary structure comprises 173 residues: Co-chaperone protein HscB homolog (173 aa).

A J domain is found at asparagine 3–leucine 75.

It belongs to the HscB family. As to quaternary structure, interacts with HscA and stimulates its ATPase activity.

Co-chaperone involved in the maturation of iron-sulfur cluster-containing proteins. Seems to help targeting proteins to be folded toward HscA. The chain is Co-chaperone protein HscB homolog from Mannheimia succiniciproducens (strain KCTC 0769BP / MBEL55E).